The primary structure comprises 214 residues: Ribonuclease P protein component 3 (214 aa).

The protein belongs to the eukaryotic/archaeal RNase P protein component 3 family. Consists of a catalytic RNA component and at least 4-5 protein subunits. Forms a subcomplex with Rnp2 which stimulates the catalytic RNA.

It is found in the cytoplasm. It catalyses the reaction Endonucleolytic cleavage of RNA, removing 5'-extranucleotides from tRNA precursor.. In terms of biological role, part of ribonuclease P, a protein complex that generates mature tRNA molecules by cleaving their 5'-ends. The RNA is catalytic, but its KM for pre-tRNA is 170-fold decreased in the presence of the 4 known protein subunits (Rnp1-4). The protein subunits also decrease the amount of Mg(2+) needed for activity. This is Ribonuclease P protein component 3 from Pyrococcus furiosus (strain ATCC 43587 / DSM 3638 / JCM 8422 / Vc1).